The following is a 449-amino-acid chain: Sensor protein QseC (449 aa).

The Cytoplasmic portion of the chain corresponds to 1–12; it reads MKLTQRLSLRVR. The chain crosses the membrane as a helical span at residues 13–33; that stretch reads LTLIFLILVSITWAISSFVAW. Over 34-161 the chain is Periplasmic; sequence RKTTDNVDEL…REDMALAIVA (128 aa). Residues 162–182 traverse the membrane as a helical segment; sequence AQLTPWLIALPFMLLILLLLL. The region spanning 183 to 235 is the HAMP domain; sequence HRELRPLKKLAQALRFRSPESETPLDAKGVPSEVRPLVEALNQLFSRIHSMMV. The Cytoplasmic segment spans residues 183-449; it reads HRELRPLKKL…EGGFEAVVSW (267 aa). Residues 243-449 enclose the Histidine kinase domain; sequence DAAHELRSPL…EGGFEAVVSW (207 aa). His246 is subject to Phosphohistidine; by autocatalysis.

It localises to the cell inner membrane. It catalyses the reaction ATP + protein L-histidine = ADP + protein N-phospho-L-histidine.. Member of a two-component regulatory system QseB/QseC. Activates the flagella regulon by activating transcription of FlhDC. May activate QseB by phosphorylation. This chain is Sensor protein QseC (qseC), found in Salmonella typhimurium (strain LT2 / SGSC1412 / ATCC 700720).